Reading from the N-terminus, the 295-residue chain is Nucleotide-binding protein SSU98_0619 (295 aa).

12–19 (GMSGAGKT) serves as a coordination point for ATP. GTP is bound at residue 62–65 (DMRS).

This sequence belongs to the RapZ-like family.

In terms of biological role, displays ATPase and GTPase activities. This is Nucleotide-binding protein SSU98_0619 from Streptococcus suis (strain 98HAH33).